A 155-amino-acid polypeptide reads, in one-letter code: Endoribonuclease YbeY (155 aa).

3 residues coordinate Zn(2+): His-120, His-124, and His-130.

This sequence belongs to the endoribonuclease YbeY family. It depends on Zn(2+) as a cofactor.

It localises to the cytoplasm. Single strand-specific metallo-endoribonuclease involved in late-stage 70S ribosome quality control and in maturation of the 3' terminus of the 16S rRNA. The sequence is that of Endoribonuclease YbeY from Alkaliphilus metalliredigens (strain QYMF).